The primary structure comprises 55 residues: ATP synthase F(0) complex subunit 8 (55 aa).

The chain crosses the membrane as a helical span at residues 10-30; it reads FPIMMLSWLIFSLIIQPKLLL. A disordered region spans residues 35 to 55; it reads NPPSNKTTTTTRSNPWTWPWT. The segment covering 37 to 55 has biased composition (low complexity); it reads PSNKTTTTTRSNPWTWPWT.

Belongs to the ATPase protein 8 family. As to quaternary structure, component of the ATP synthase complex composed at least of ATP5F1A/subunit alpha, ATP5F1B/subunit beta, ATP5MC1/subunit c (homooctomer), MT-ATP6/subunit a, MT-ATP8/subunit 8, ATP5ME/subunit e, ATP5MF/subunit f, ATP5MG/subunit g, ATP5MK/subunit k, ATP5MJ/subunit j, ATP5F1C/subunit gamma, ATP5F1D/subunit delta, ATP5F1E/subunit epsilon, ATP5PF/subunit F6, ATP5PB/subunit b, ATP5PD/subunit d, ATP5PO/subunit OSCP. ATP synthase complex consists of a soluble F(1) head domain (subunits alpha(3) and beta(3)) - the catalytic core - and a membrane F(0) domain - the membrane proton channel (subunits c, a, 8, e, f, g, k and j). These two domains are linked by a central stalk (subunits gamma, delta, and epsilon) rotating inside the F1 region and a stationary peripheral stalk (subunits F6, b, d, and OSCP).

The protein localises to the mitochondrion membrane. In terms of biological role, subunit 8, of the mitochondrial membrane ATP synthase complex (F(1)F(0) ATP synthase or Complex V) that produces ATP from ADP in the presence of a proton gradient across the membrane which is generated by electron transport complexes of the respiratory chain. ATP synthase complex consist of a soluble F(1) head domain - the catalytic core - and a membrane F(1) domain - the membrane proton channel. These two domains are linked by a central stalk rotating inside the F(1) region and a stationary peripheral stalk. During catalysis, ATP synthesis in the catalytic domain of F(1) is coupled via a rotary mechanism of the central stalk subunits to proton translocation. In vivo, can only synthesize ATP although its ATP hydrolase activity can be activated artificially in vitro. Part of the complex F(0) domain. In Opisthocomus hoazin (Hoatzin), this protein is ATP synthase F(0) complex subunit 8.